Reading from the N-terminus, the 256-residue chain is Adenylate kinase (256 aa).

ATP is bound at residue 49 to 54; the sequence is GAGKGT. The tract at residues 69–98 is NMP; sequence ATGDMLRDQVEKKTPLGIAAKKIMDAGGLV. Residues T70, R75, 96 to 98, 125 to 128, and Q132 each bind AMP; these read GLV and GFPR. The segment at 166–203 is LID; it reads GRLIHPASGRSYHKIFNPPKKAGIDDLTGEPLIQRSDD. ATP is bound by residues R167 and 176 to 177; that span reads SY. 2 residues coordinate AMP: R200 and R211. Q239 is a binding site for ATP.

The protein belongs to the adenylate kinase family. AK2 subfamily. Monomer.

It localises to the cytoplasm. Its subcellular location is the cytosol. The protein resides in the mitochondrion intermembrane space. The catalysed reaction is AMP + ATP = 2 ADP. In terms of biological role, catalyzes the reversible transfer of the terminal phosphate group between ATP and AMP. Plays an important role in cellular energy homeostasis and in adenine nucleotide metabolism. Adenylate kinase activity is critical for regulation of the phosphate utilization and the AMP de novo biosynthesis pathways. This Coprinopsis cinerea (strain Okayama-7 / 130 / ATCC MYA-4618 / FGSC 9003) (Inky cap fungus) protein is Adenylate kinase.